The sequence spans 239 residues: tRNA (guanine-N(1)-)-methyltransferase (239 aa).

S-adenosyl-L-methionine-binding positions include Gly109 and 128-133 (IGDYVL).

It belongs to the RNA methyltransferase TrmD family. Homodimer.

It localises to the cytoplasm. The enzyme catalyses guanosine(37) in tRNA + S-adenosyl-L-methionine = N(1)-methylguanosine(37) in tRNA + S-adenosyl-L-homocysteine + H(+). Specifically methylates guanosine-37 in various tRNAs. This is tRNA (guanine-N(1)-)-methyltransferase from Thermus thermophilus (strain ATCC BAA-163 / DSM 7039 / HB27).